The primary structure comprises 85 residues: RNA-binding protein Hfq (85 aa).

Residues 9-68 (DPFLNALRRERIPVSIYLVNGIKLQGQVESFDQFVILLKNTVSQMVYKHAISTVVPARPV) enclose the Sm domain.

It belongs to the Hfq family. In terms of assembly, homohexamer.

Functionally, RNA chaperone that binds small regulatory RNA (sRNAs) and mRNAs to facilitate mRNA translational regulation in response to envelope stress, environmental stress and changes in metabolite concentrations. Also binds with high specificity to tRNAs. The sequence is that of RNA-binding protein Hfq from Tolumonas auensis (strain DSM 9187 / NBRC 110442 / TA 4).